A 500-amino-acid chain; its full sequence is MNISTLRLDSNPITTATATHRNGILGCNGTYSCRFNQFQQRKKTPSVIVCSTKPLASVVDHQGVNESGLSRIESLSQVSGVLGCQWGDEGKGKLVDILAKHFDIVARCQGGANAGHTIYNSEGKKFALHLVPSGILNEETLCVIGNGVVVHLPGLFKEIDGLEANGVSCQGRILVSDRAHLLFDFHQEIDGLREAELAKSFIGTTKRGIGPCYSSKVIRNGLRVSDLRHMDIFPQKLDLLLSDAAARFPGFKYGPDMLREEVERYKKFAERLEPFVADTVHFMNDAISQKKKILVEGGQATMLDIDFGTYPFVTSSSPSAGGICTGLGIAPRVVGDLVGVVKAYTTRVGSGPFPTEIMDKGGDLLRFAGQEFGTTTGRPRRCGWLDIVALRFCCQINGFASLNLTKLDVLSDLPEIQLGVTYRHPDGSALNSFPSDLRLLEQIKVEYEVLPGWKSDISSIRKYTDLPKAAREYVERIEELIGVPIHYIGIGPGRDALIYK.

Residues 87 to 93 and 115 to 117 each bind GTP; these read GDEGKGK and GHT. Asp-88 acts as the Proton acceptor in catalysis. Mg(2+) contacts are provided by Asp-88 and Gly-115. IMP is bound by residues 88-91, 113-116, Thr-205, Arg-219, Gln-299, Thr-314, and Arg-378; these read DEGK and NAGH. The Proton donor role is filled by His-116. 374 to 380 is a binding site for substrate; it reads TTTGRPR. GTP contacts are provided by residues Arg-380, 406-408, and 489-491; these read KLD and GIG.

This sequence belongs to the adenylosuccinate synthetase family. Homodimer. It depends on Mg(2+) as a cofactor.

The protein localises to the plastid. It is found in the chloroplast. The catalysed reaction is IMP + L-aspartate + GTP = N(6)-(1,2-dicarboxyethyl)-AMP + GDP + phosphate + 2 H(+). It participates in purine metabolism; AMP biosynthesis via de novo pathway; AMP from IMP: step 1/2. Its function is as follows. Plays an important role in the de novo pathway and in the salvage pathway of purine nucleotide biosynthesis. Catalyzes the first committed step in the biosynthesis of AMP from IMP. This is Adenylosuccinate synthetase, chloroplastic from Solanum bulbocastanum (Wild potato).